The following is a 302-amino-acid chain: Phosphoribosylaminoimidazole-succinocarboxamide synthase (302 aa).

It belongs to the SAICAR synthetase family.

It carries out the reaction 5-amino-1-(5-phospho-D-ribosyl)imidazole-4-carboxylate + L-aspartate + ATP = (2S)-2-[5-amino-1-(5-phospho-beta-D-ribosyl)imidazole-4-carboxamido]succinate + ADP + phosphate + 2 H(+). It participates in purine metabolism; IMP biosynthesis via de novo pathway; 5-amino-1-(5-phospho-D-ribosyl)imidazole-4-carboxamide from 5-amino-1-(5-phospho-D-ribosyl)imidazole-4-carboxylate: step 1/2. The protein is Phosphoribosylaminoimidazole-succinocarboxamide synthase of Polaromonas sp. (strain JS666 / ATCC BAA-500).